The chain runs to 330 residues: uncharacterized protein (330 aa).

This is an uncharacterized protein from Acanthamoeba polyphaga (Amoeba).